The following is a 355-amino-acid chain: uncharacterized protein (355 aa).

The segment at M1–R104 is disordered. An N6-acetyllysine modification is found at K19. Acidic residues predominate over residues E45–M54. Position 175 is a phosphoserine (S175). Disordered stretches follow at residues P247–K310 and S325–P355. Y293 carries the post-translational modification Phosphotyrosine. S294 carries the phosphoserine modification. The span at S325 to T334 shows a compositional bias: polar residues. Low complexity predominate over residues L336–P348.

This is an uncharacterized protein from Homo sapiens (Human).